The sequence spans 219 residues: Ribonuclease HII (219 aa).

The RNase H type-2 domain occupies 10–219 (HLEAGTDEAG…LLPEQTVLDL (210 aa)). Aspartate 16, glutamate 17, and aspartate 108 together coordinate a divalent metal cation.

Belongs to the RNase HII family. Mn(2+) is required as a cofactor. Requires Mg(2+) as cofactor.

It is found in the cytoplasm. The enzyme catalyses Endonucleolytic cleavage to 5'-phosphomonoester.. In terms of biological role, endonuclease that specifically degrades the RNA of RNA-DNA hybrids. This chain is Ribonuclease HII, found in Flavobacterium psychrophilum (strain ATCC 49511 / DSM 21280 / CIP 103535 / JIP02/86).